Reading from the N-terminus, the 269-residue chain is tRNA pseudouridine synthase A (269 aa).

The Nucleophile role is filled by D51. Y109 lines the substrate pocket.

It belongs to the tRNA pseudouridine synthase TruA family. Homodimer.

The catalysed reaction is uridine(38/39/40) in tRNA = pseudouridine(38/39/40) in tRNA. Its function is as follows. Formation of pseudouridine at positions 38, 39 and 40 in the anticodon stem and loop of transfer RNAs. The protein is tRNA pseudouridine synthase A of Aeromonas salmonicida (strain A449).